The primary structure comprises 268 residues: Activator of basal transcription 1 (268 aa).

Positions 6–38 (KLVEEQKAAMEEEKEVNAEAAEELEEAEEASCN) form a coiled coil. The region spanning 47 to 144 (GIVYLGHVPP…RKRSPFRYDL (98 aa)) is the RRM domain. A coiled-coil region spans residues 163–193 (AFERQVRRQRLRAEVAQAKRETDFYLRNVEQ). The segment at 200–242 (ADGDATRPNSSWTFTQRPTEQELRAQKGARPGGRERARLATVQ) is disordered. Over residues 206 to 217 (RPNSSWTFTQRP) the composition is skewed to polar residues.

It belongs to the ESF2/ABP1 family. In terms of assembly, interacts with IGHMBP2. Interacts with ESF1/ABTAP.

Its subcellular location is the nucleus. The protein resides in the nucleolus. In terms of biological role, may be a novel TATA-binding protein (TBP) which can function as a basal transcription activator. Can act as a regulator of basal transcription for class II genes. The polypeptide is Activator of basal transcription 1 (Abt1) (Rattus norvegicus (Rat)).